Here is an 872-residue protein sequence, read N- to C-terminus: MRDFYVRVTILVTGLCFVETVTTPSRKSSVSFNPEYQRNGDLLVNWSSIRHVSQNTDAMDRSFYFFRVLFQPHTQKERHIKPPDRTHHRISKVTLDPLAHLHALEILNLSNKAIHYFSLDQPLPPSSHQKRHGGHSHSRLPRLQVLILQRNQLSGTPKGLWKLKSLRSLDLSFNRIVHIGLSDFHGCLQLESIYLKSNKICTIHPKAFKGLKKLQVVDLRSNALTTLVPIVTIALELPHLELGLADNQWQCSESNVNFQNITSSSWREIWKAICNMSVENKRPNAETHQIRKSRDTHLLLSPPSDLKSLIQSKAERPQAGMDMHLSALGKEAKDGYGDLRGMWPQSPVELRDSQDEQVTDRKDDKPPALELAICLSVFITFVVAFCLGAFARPYIDRLRQQRCSNKRPGSDNAYSNKGFHGDIEGAQHMEYQGTDLHQTTHHLHLSENQNPSWVAEPIPHSAVQSEQMLGSNGTDPGHQQSPEQLKDSNESRSGDSIVLPSGPVAHLALHGLPNADAHKAISPVQHHHDFLEEAHYDTVAQEYSLIDDVMDRSSITGPLGTFPSSVESRRDDLHPSQPRDVVASFSKTLAHANTREAEGSMETGCPEPLGAMDSQMGSSEERQVSNSIRELATQQPSFQGVDAEERLSHVYSEVLHNDPPSLRPRWGSGHYVIPATGEPVERDAPFDPHYDLVTNYESDSDEGSLFTLSSEGSEDTRSLAEEQASVENDGTSQPLPSRNLGEYKDSVTSAESVEDLTSQRIPEKCEAQEAHLRNTLISGPDSCVCETNQENDSSSLDPENRSTWPQLPGHKLSHHETLGTYGDIEPQSEAVDWHYSLRDLESPNVDSSPSPPYSDEDLSGPEDRARKRSKHW.

A helical transmembrane segment spans residues phenylalanine 4 to proline 24. Residues asparagine 45 and asparagine 108 are each glycosylated (N-linked (GlcNAc...) asparagine). LRR repeat units lie at residues arginine 142–lysine 164, serine 165–glycine 186, glutamine 189–glycine 210, lysine 213–alanine 234, and histidine 239–glutamine 259. A disordered region spans residues leucine 339–aspartate 363. Basic and acidic residues predominate over residues glutamate 349–aspartate 363. A helical transmembrane segment spans residues leucine 371–alanine 391. Polar residues predominate over residues glutamine 467–glutamate 483. 4 disordered regions span residues glutamine 467–serine 501, glycine 560–arginine 579, asparagine 695–isoleucine 761, and leucine 776–tryptophan 872. N-linked (GlcNAc...) asparagine glycosylation occurs at asparagine 472. A compositionally biased stretch (basic and acidic residues) spans glutamine 484–serine 493. Serine 718 carries the phosphoserine modification. Composition is skewed to polar residues over residues serine 725–proline 736, serine 746–arginine 760, and cysteine 785–proline 805. At serine 752 the chain carries Phosphoserine. A compositionally biased stretch (basic and acidic residues) spans valine 831–glutamate 841.

The protein resides in the membrane. This is Leucine-rich repeat-containing protein 66 (Lrrc66) from Mus musculus (Mouse).